The following is a 313-amino-acid chain: PDZ domain-containing protein GIPC2 (313 aa).

Over residues 14 to 27 the composition is skewed to basic and acidic residues; it reads KETSRLVEGEHTDA. Positions 14-34 are disordered; that stretch reads KETSRLVEGEHTDAAVRSLPS. A PDZ domain is found at 117 to 197; it reads EVNVYKSEDS…EELFTLTLIE (81 aa).

Belongs to the GIPC family. As to quaternary structure, probably interacts with SEMA5A.

The protein resides in the cytoplasm. This is PDZ domain-containing protein GIPC2 (GIPC2) from Bos taurus (Bovine).